The sequence spans 88 residues: Large ribosomal subunit protein eL34 (88 aa).

Belongs to the eukaryotic ribosomal protein eL34 family.

The chain is Large ribosomal subunit protein eL34 from Methanobrevibacter smithii (strain ATCC 35061 / DSM 861 / OCM 144 / PS).